We begin with the raw amino-acid sequence, 353 residues long: MGCGMSTEEKEGKARNEEIENQLKRDRMQQRNEIKMLLLGAGESGKSTILKQMKLIHEGGYSRDERESFKEIIFSNTVQSMRVILEAMESLELPLEDQRMEYHVQTIFMQPAQIEGDVLPPEVGSAIEALWKDRGVQECFKRSREYQLNDSARYYFDNIARIAAPDYMPNDQDVLRSRVKTTGITETTFIIGDLTYRMFDVGGQRSERKKWIHCFENVTTILFLVAISEYDQLLFEDETVNRMQEALTLFDSICNSRWFIKTSIILFLNKIDRFKEKLPVSPMKNYFPDYEGGDDYAAACDYILNRFVSLNQHETKQIYTHFTCATDTTQIRFVMAAVNDIIIQENLRLCGLI.

A disordered region spans residues 1–26; that stretch reads MGCGMSTEEKEGKARNEEIENQLKRD. Gly2 carries the N-myristoyl glycine lipid modification. Residue Cys3 is the site of S-palmitoyl cysteine attachment. Over residues 7 to 26 the composition is skewed to basic and acidic residues; sequence TEEKEGKARNEEIENQLKRD. Residues 32 to 353 enclose the G-alpha domain; it reads NEIKMLLLGA…QENLRLCGLI (322 aa). The segment at 35–48 is G1 motif; it reads KMLLLGAGESGKST. 14 residues coordinate GTP: Glu43, Ser44, Gly45, Lys46, Ser47, Thr48, Asp150, Leu175, Thr181, Gly203, Asn269, Lys270, Asp272, and Ala325. Position 47 (Ser47) interacts with Mg(2+). Residues 173-181 form a G2 motif region; it reads DVLRSRVKT. Residue Thr181 coordinates Mg(2+). The G3 motif stretch occupies residues 196–205; it reads YRMFDVGGQR. Positions 265-272 are G4 motif; that stretch reads ILFLNKID. Positions 323–328 are G5 motif; it reads TCATDT.

It belongs to the G-alpha family. G(q) subfamily. G proteins are composed of 3 units; alpha, beta and gamma. The alpha chain contains the guanine nucleotide binding site. Mg(2+) is required as a cofactor.

In terms of biological role, guanine nucleotide-binding proteins (G proteins) are involved as modulators or transducers in various transmembrane signaling systems. This Cryphonectria parasitica (Chestnut blight fungus) protein is Guanine nucleotide-binding protein subunit alpha.